We begin with the raw amino-acid sequence, 303 residues long: HTH-type transcriptional regulator YjiE (303 aa).

The HTH lysR-type domain occupies 11-68 (IETKWLYDFLTLEKCRNFSQAAVSRNVSQPAFSRRIRALEQAIGVELFNRQVTPLQLS). The segment at residues 28-47 (FSQAAVSRNVSQPAFSRRIR) is a DNA-binding region (H-T-H motif).

Belongs to the LysR transcriptional regulatory family. Forms dimers, tetramers and possibly dodecameric complexes; oligomerization may be governed by cellular concentrations. DNA-binding seems to decrease oligomerization.

In terms of biological role, protects cells from HOCl (hypochlorite) stress but not peroxide or diamide stress. Decreases the intracellular load of reactive oxygen species by up-regulating genes involved in methionine and cysteine biosynthesis and down-regulating Fur-regulated genes involved in iron acquisition. Has also been suggested to down-regulate expression of the flagellar regulon, decreasing motility, but this activity was not confirmed in a second study. In Escherichia coli (strain K12), this protein is HTH-type transcriptional regulator YjiE (yjiE).